The sequence spans 138 residues: Flavodoxin (138 aa).

A Flavodoxin-like domain is found at 1–136 (MKIVYWSGTG…DCIEFGKKIA (136 aa)).

The protein belongs to the flavodoxin family. Requires FMN as cofactor.

Low-potential electron donor to a number of redox enzymes. In Clostridium beijerinckii (Clostridium MP), this protein is Flavodoxin.